A 359-amino-acid polypeptide reads, in one-letter code: DNA polymerase IV (359 aa).

One can recognise a UmuC domain in the interval 7–188 (IIHIDMDAFY…IPIGKFFGVG (182 aa)). Residues aspartate 11 and aspartate 106 each coordinate Mg(2+). Glutamate 107 is an active-site residue.

This sequence belongs to the DNA polymerase type-Y family. In terms of assembly, monomer. Requires Mg(2+) as cofactor.

It localises to the cytoplasm. It carries out the reaction DNA(n) + a 2'-deoxyribonucleoside 5'-triphosphate = DNA(n+1) + diphosphate. Functionally, poorly processive, error-prone DNA polymerase involved in untargeted mutagenesis. Copies undamaged DNA at stalled replication forks, which arise in vivo from mismatched or misaligned primer ends. These misaligned primers can be extended by PolIV. Exhibits no 3'-5' exonuclease (proofreading) activity. May be involved in translesional synthesis, in conjunction with the beta clamp from PolIII. This chain is DNA polymerase IV, found in Clostridium perfringens (strain ATCC 13124 / DSM 756 / JCM 1290 / NCIMB 6125 / NCTC 8237 / Type A).